Here is a 197-residue protein sequence, read N- to C-terminus: Glycerol-3-phosphate acyltransferase (197 aa).

4 helical membrane-spanning segments follow: residues 5–25 (LILITAYLLGSIPFALLVGKI), 70–90 (LPVLFSVHIHPLLAGVCAVIG), 111–131 (VMLFYSPFLFVSLLTVFFIVL), and 153–173 (IFFTDDIPLMIAVSLLTAFIF).

Belongs to the PlsY family. As to quaternary structure, probably interacts with PlsX.

The protein localises to the cell membrane. The catalysed reaction is an acyl phosphate + sn-glycerol 3-phosphate = a 1-acyl-sn-glycero-3-phosphate + phosphate. It functions in the pathway lipid metabolism; phospholipid metabolism. Its function is as follows. Catalyzes the transfer of an acyl group from acyl-phosphate (acyl-PO(4)) to glycerol-3-phosphate (G3P) to form lysophosphatidic acid (LPA). This enzyme utilizes acyl-phosphate as fatty acyl donor, but not acyl-CoA or acyl-ACP. This Geobacillus sp. (strain WCH70) protein is Glycerol-3-phosphate acyltransferase.